A 191-amino-acid chain; its full sequence is Large ribosomal subunit protein bL25 (191 aa).

Belongs to the bacterial ribosomal protein bL25 family. CTC subfamily. As to quaternary structure, part of the 50S ribosomal subunit; part of the 5S rRNA/L5/L18/L25 subcomplex. Contacts the 5S rRNA. Binds to the 5S rRNA independently of L5 and L18.

This is one of the proteins that binds to the 5S RNA in the ribosome where it forms part of the central protuberance. The protein is Large ribosomal subunit protein bL25 of Nitratidesulfovibrio vulgaris (strain DSM 19637 / Miyazaki F) (Desulfovibrio vulgaris).